A 439-amino-acid polypeptide reads, in one-letter code: Methylenetetrahydrofolate--tRNA-(uracil-5-)-methyltransferase TrmFO (439 aa).

An FAD-binding site is contributed by 9–14 (GAGLAG).

This sequence belongs to the MnmG family. TrmFO subfamily. The cofactor is FAD.

The protein localises to the cytoplasm. The enzyme catalyses uridine(54) in tRNA + (6R)-5,10-methylene-5,6,7,8-tetrahydrofolate + NADH + H(+) = 5-methyluridine(54) in tRNA + (6S)-5,6,7,8-tetrahydrofolate + NAD(+). It carries out the reaction uridine(54) in tRNA + (6R)-5,10-methylene-5,6,7,8-tetrahydrofolate + NADPH + H(+) = 5-methyluridine(54) in tRNA + (6S)-5,6,7,8-tetrahydrofolate + NADP(+). Its function is as follows. Catalyzes the folate-dependent formation of 5-methyl-uridine at position 54 (M-5-U54) in all tRNAs. This chain is Methylenetetrahydrofolate--tRNA-(uracil-5-)-methyltransferase TrmFO, found in Desulforudis audaxviator (strain MP104C).